Consider the following 428-residue polypeptide: 3-phosphoshikimate 1-carboxyvinyltransferase (428 aa).

3 residues coordinate 3-phosphoshikimate: lysine 22, serine 23, and arginine 27. Residue lysine 22 participates in phosphoenolpyruvate binding. Residues glycine 95 and arginine 123 each coordinate phosphoenolpyruvate. 3-phosphoshikimate is bound by residues serine 170, serine 171, glutamine 172, serine 197, aspartate 316, and lysine 343. Glutamine 172 contributes to the phosphoenolpyruvate binding site. The active-site Proton acceptor is aspartate 316. Phosphoenolpyruvate contacts are provided by arginine 347, arginine 390, and lysine 414.

This sequence belongs to the EPSP synthase family. In terms of assembly, monomer.

Its subcellular location is the cytoplasm. The enzyme catalyses 3-phosphoshikimate + phosphoenolpyruvate = 5-O-(1-carboxyvinyl)-3-phosphoshikimate + phosphate. Its pathway is metabolic intermediate biosynthesis; chorismate biosynthesis; chorismate from D-erythrose 4-phosphate and phosphoenolpyruvate: step 6/7. Its function is as follows. Catalyzes the transfer of the enolpyruvyl moiety of phosphoenolpyruvate (PEP) to the 5-hydroxyl of shikimate-3-phosphate (S3P) to produce enolpyruvyl shikimate-3-phosphate and inorganic phosphate. This is 3-phosphoshikimate 1-carboxyvinyltransferase from Laribacter hongkongensis (strain HLHK9).